A 620-amino-acid chain; its full sequence is MSKSKCSVGLMSSVVAPAKEPNAVGPKEVELILVKEQNGVQLTSSTLTNPRQSPVEAQDRETWGKKIDFLLSVIGFAVDLANVWRFPYLCYKNGGGAFLVPYLLFMVIAGMPLFYMELALGQFNREGAAGVWKICPILKGVGFTVILISLYVGFFYNVIIAWALHYLFSSFTTELPWIHCNNSWNSPNCSDAHPGDSSGDSSGLNDTFGTTPAAEYFERGVLHLHQSHGIDDLGPPRWQLTACLVLVIVLLYFSLWKGVKTSGKVVWITATMPYVVLTALLLRGVTLPGAIDGIRAYLSVDFYRLCEASVWIDAATQVCFSLGVGFGVLIAFSSYNKFTNNCYRDAIVTTSINSLTSFSSGFVVFSFLGYMAQKHSVPIGDVAKDGPGLIFIIYPEAIATLPLSSAWAVVFFIMLLTLGIDSAMGGMESVITGLIDEFQLLHRHRELFTLFIVLATFLLSLFCVTNGGIYVFTLLDHFAAGTSILFGVLIEAIGVAWFYGVGQFSDDIQQMTGQRPSLYWRLCWKLVSPCFLLFVVVVSIVTFRPPHYGAYIFPDWANALGWVIATSSMAMVPIYAAYKFCSLPGSFREKLAYAIAPEKDRELVDRGEVRQFTLRHWLKV.

The Cytoplasmic segment spans residues 1–56 (MSKSKCSVGLMSSVVAPAKEPNAVGPKEVELILVKEQNGVQLTSSTLTNPRQSPVE). The discontinuously helical transmembrane segment at 57–95 (AQDRETWGKKIDFLLSVIGFAVDLANVWRFPYLCYKNGG) threads the bilayer. Na(+) is bound by residues Gly75, Ala77, Val78, Asp79, and Asn82. Position 79 (Asp79) interacts with dopamine. Transmembrane regions (helical) follow at residues 96–127 (GAFL…NREG) and 128–171 (AAGV…FSSF). Ser149 and Gly153 together coordinate dopamine. At 172 to 236 (TTELPWIHCN…SHGIDDLGPP (65 aa)) the chain is on the extracellular side. An intrachain disulfide couples Cys180 to Cys189. Asn181, Asn188, and Asn205 each carry an N-linked (GlcNAc...) asparagine glycan. Transmembrane regions (helical) follow at residues 237 to 256 (RWQL…FSLW) and 257 to 287 (KGVK…GVTL). The Extracellular segment spans residues 288–306 (PGAIDGIRAYLSVDFYRLC). Residues 307–335 (EASVWIDAATQVCFSLGVGFGVLIAFSSY) traverse the membrane as a discontinuously helical segment. Gln317 is a chloride binding site. Residue Phe320 participates in dopamine binding. Positions 321 and 353 each coordinate Na(+). Position 321 (Ser321) interacts with chloride. Residues 336-376 (NKFTNNCYRDAIVTTSINSLTSFSSGFVVFSFLGYMAQKHS) traverse the membrane as a helical segment. Chloride is bound at residue Ser357. Over 377-400 (VPIGDVAKDGPGLIFIIYPEAIAT) the chain is Extracellular. 3 consecutive transmembrane segments (helical) span residues 401-442 (LPLS…QLLH), 443-466 (RHRE…CVTN), and 467-499 (GGIY…AWFY). Residues Leu418, Asp421, and Ser422 each coordinate Na(+). Residues Ser422 and Ala423 each coordinate dopamine. Residues 500-516 (GVGQFSDDIQQMTGQRP) lie on the Cytoplasmic side of the membrane. A helical transmembrane segment spans residues 517-542 (SLYWRLCWKLVSPCFLLFVVVVSIVT). Residues 543 to 553 (FRPPHYGAYIF) lie on the Extracellular side of the membrane. Residues 554 to 583 (PDWANALGWVIATSSMAMVPIYAAYKFCSL) form a helical membrane-spanning segment. Residues 561 to 590 (GWVIATSSMAMVPIYAAYKFCSLPGSFREK) are interaction with TGFB1I1. The Cytoplasmic portion of the chain corresponds to 584-620 (PGSFREKLAYAIAPEKDRELVDRGEVRQFTLRHWLKV).

This sequence belongs to the sodium:neurotransmitter symporter (SNF) (TC 2.A.22) family. SLC6A3 subfamily. In terms of assembly, monomer. Homooligomer; disulfide-linked. Interacts with PRKCABP and TGFB1I1. Interacts (via N-terminus) with SYNGR3 (via N-terminus). Interacts with SLC18A2. Interacts with TOR1A (ATP-bound); TOR1A regulates SLC6A3 subcellular location. Interacts with alpha-synuclein/SNCA. Interacts with SEPTIN4. As to expression, highly expressed in substantia nigra. Expressed in axonal varicosities in dopaminergic nerve terminals (at protein level). Expressed in the striatum (at protein level).

The protein localises to the cell membrane. The protein resides in the cell projection. It localises to the neuron projection. Its subcellular location is the axon. The catalysed reaction is dopamine(out) + chloride(out) + Na(+)(out) = dopamine(in) + chloride(in) + Na(+)(in). It carries out the reaction dopamine(out) + chloride(out) + 2 Na(+)(out) = dopamine(in) + chloride(in) + 2 Na(+)(in). It catalyses the reaction (R)-noradrenaline(out) + chloride(out) + Na(+)(out) = (R)-noradrenaline(in) + chloride(in) + Na(+)(in). With respect to regulation, inhibited by cocaine, which occupies the same binding site as dopamine. Inhibited by zinc ions. Enhanced by the antibiotic valinomycin. Inhibited by benztropine. Inhibited by GBR 12909 dihydrochloride and amphetamine. Inhibited by mazindol, GBR 12783 dihydrochloride, nomifensine, diclofensine, amfonelic acid, Lu 19005, Win-35428, bupropion and ritalin. Its function is as follows. Mediates sodium- and chloride-dependent transport of dopamine. Also mediates sodium- and chloride-dependent transport of norepinephrine (also known as noradrenaline). Regulator of light-dependent retinal hyaloid vessel regression, downstream of OPN5 signaling. This Homo sapiens (Human) protein is Sodium-dependent dopamine transporter (SLC6A3).